We begin with the raw amino-acid sequence, 218 residues long: Glycerol-3-phosphate acyltransferase (218 aa).

The next 6 membrane-spanning stretches (helical) occupy residues 3–23, 53–73, 82–102, 112–132, 142–162, and 166–186; these read FAIF…YWIA, GFPV…LSGI, FQLA…FLGF, LGVF…VFLV, IGSI…SILL, and EVSY…ILTH.

This sequence belongs to the PlsY family. As to quaternary structure, probably interacts with PlsX.

The protein resides in the cell inner membrane. It catalyses the reaction an acyl phosphate + sn-glycerol 3-phosphate = a 1-acyl-sn-glycero-3-phosphate + phosphate. It functions in the pathway lipid metabolism; phospholipid metabolism. In terms of biological role, catalyzes the transfer of an acyl group from acyl-phosphate (acyl-PO(4)) to glycerol-3-phosphate (G3P) to form lysophosphatidic acid (LPA). This enzyme utilizes acyl-phosphate as fatty acyl donor, but not acyl-CoA or acyl-ACP. The polypeptide is Glycerol-3-phosphate acyltransferase (Leptospira borgpetersenii serovar Hardjo-bovis (strain JB197)).